A 409-amino-acid polypeptide reads, in one-letter code: Peptidase T (409 aa).

His-78 contributes to the Zn(2+) binding site. The active site involves Asp-80. A Zn(2+)-binding site is contributed by Asp-140. Glu-173 serves as the catalytic Proton acceptor. Glu-174, Asp-196, and His-379 together coordinate Zn(2+).

The protein belongs to the peptidase M20B family. Zn(2+) is required as a cofactor.

It localises to the cytoplasm. It carries out the reaction Release of the N-terminal residue from a tripeptide.. Its function is as follows. Cleaves the N-terminal amino acid of tripeptides. The chain is Peptidase T from Salmonella dublin (strain CT_02021853).